Here is a 377-residue protein sequence, read N- to C-terminus: Nitric oxide reductase FlRd-NAD(+) reductase (377 aa).

The protein belongs to the FAD-dependent oxidoreductase family. The cofactor is FAD.

The protein localises to the cytoplasm. It carries out the reaction 2 reduced [nitric oxide reductase rubredoxin domain] + NAD(+) + H(+) = 2 oxidized [nitric oxide reductase rubredoxin domain] + NADH. Its pathway is nitrogen metabolism; nitric oxide reduction. In terms of biological role, one of at least two accessory proteins for anaerobic nitric oxide (NO) reductase. Reduces the rubredoxin moiety of NO reductase. The polypeptide is Nitric oxide reductase FlRd-NAD(+) reductase (Salmonella schwarzengrund (strain CVM19633)).